The primary structure comprises 631 residues: MSATKLTRREQRARAQHFIDTLEGTAFPNSKRIYITGTHPGVRVPMREIQLSPTLIGGSKEQPQYEENEAIPVYDTSGPYGDPQIAINVQQGLAKLRQPWIDARGDTEELTVRSSDYTKARLADDGLDELRFSGVLTPKRAKAGRRVTQLHYARQGIITPEMEFIAIRENMGRERIRSEVLRHQHPGMSFGAHLPENITAEFVRDEVAAGRAIIPANINHPESEPMIIGRNFLVKVNANIGNSAVTSSIEEEVEKLVWSTRWGADTVMDLSTGRYIHETREWILRNSPVPIGTVPIYQALEKVNGIAEDLTWEAFRDTLLEQAEQGVDYFTIHAGVLLRYVPMTAKRLTGIVSRGGSIMAKWCLSHHQENFLYQHFREICEICAAYDVSLSLGDGLRPGSIQDANDEAQFAELHTLGELTKIAWEYDVQVMIEGPGHVPMQMIRRNMTEELEHCHEAPFYTLGPLTTDIAPGYDHFTSGIGAAMIGWFGCAMLCYVTPKEHLGLPNKEDVKQGLITYKIAAHAADLAKGHPGAQIRDNAMSKARFEFRWEDQFNLALDPFTARAYHDETLPQESGKVAHFCSMCGPKFCSMKISQEVRDYAATQTIEMGMADMSENFRARGGEIYLRKEEA.

Substrate contacts are provided by residues Asn239, Met268, Tyr297, His333, 353–355 (SRG), 394–397 (DGLR), and Glu433. Zn(2+) is bound at residue His437. Tyr460 is a binding site for substrate. His501 provides a ligand contact to Zn(2+). The [4Fe-4S] cluster site is built by Cys581, Cys584, and Cys589.

This sequence belongs to the ThiC family. As to quaternary structure, homodimer. [4Fe-4S] cluster serves as cofactor.

It catalyses the reaction 5-amino-1-(5-phospho-beta-D-ribosyl)imidazole + S-adenosyl-L-methionine = 4-amino-2-methyl-5-(phosphooxymethyl)pyrimidine + CO + 5'-deoxyadenosine + formate + L-methionine + 3 H(+). Its pathway is cofactor biosynthesis; thiamine diphosphate biosynthesis. In terms of biological role, catalyzes the synthesis of the hydroxymethylpyrimidine phosphate (HMP-P) moiety of thiamine from aminoimidazole ribotide (AIR) in a radical S-adenosyl-L-methionine (SAM)-dependent reaction. The sequence is that of Phosphomethylpyrimidine synthase from Escherichia coli O8 (strain IAI1).